The primary structure comprises 300 residues: Actin-related protein 2/3 complex subunit 2-B (300 aa).

This sequence belongs to the ARPC2 family. As to quaternary structure, component of the Arp2/3 complex composed of actr2/arp2, actr3/arp3, arpc1 (arpc1a or arpc1b), arpc2, arpc3, arpc4 and arpc5.

Its subcellular location is the cytoplasm. The protein localises to the cytoskeleton. It localises to the cell projection. The protein resides in the nucleus. Functionally, actin-binding component of the Arp2/3 complex, a multiprotein complex that mediates actin polymerization upon stimulation by nucleation-promoting factor (NPF). The Arp2/3 complex mediates the formation of branched actin networks in the cytoplasm, providing the force for cell motility. In addition to its role in the cytoplasmic cytoskeleton, the Arp2/3 complex also promotes actin polymerization in the nucleus, thereby regulating gene transcription and repair of damaged DNA. The Arp2/3 complex promotes homologous recombination (HR) repair in response to DNA damage by promoting nuclear actin polymerization, leading to drive motility of double-strand breaks (DSBs). In Xenopus laevis (African clawed frog), this protein is Actin-related protein 2/3 complex subunit 2-B (arpc2-b).